Consider the following 223-residue polypeptide: Phosphoribosylformylglycinamidine synthase subunit PurQ (223 aa).

The 220-residue stretch at 4–223 (KIGVITFPGT…FLSAVGTIAA (220 aa)) folds into the Glutamine amidotransferase type-1 domain. Cys-87 (nucleophile) is an active-site residue. Catalysis depends on residues His-195 and Glu-197.

In terms of assembly, part of the FGAM synthase complex composed of 1 PurL, 1 PurQ and 2 PurS subunits.

It is found in the cytoplasm. The enzyme catalyses N(2)-formyl-N(1)-(5-phospho-beta-D-ribosyl)glycinamide + L-glutamine + ATP + H2O = 2-formamido-N(1)-(5-O-phospho-beta-D-ribosyl)acetamidine + L-glutamate + ADP + phosphate + H(+). It carries out the reaction L-glutamine + H2O = L-glutamate + NH4(+). The protein operates within purine metabolism; IMP biosynthesis via de novo pathway; 5-amino-1-(5-phospho-D-ribosyl)imidazole from N(2)-formyl-N(1)-(5-phospho-D-ribosyl)glycinamide: step 1/2. Functionally, part of the phosphoribosylformylglycinamidine synthase complex involved in the purines biosynthetic pathway. Catalyzes the ATP-dependent conversion of formylglycinamide ribonucleotide (FGAR) and glutamine to yield formylglycinamidine ribonucleotide (FGAM) and glutamate. The FGAM synthase complex is composed of three subunits. PurQ produces an ammonia molecule by converting glutamine to glutamate. PurL transfers the ammonia molecule to FGAR to form FGAM in an ATP-dependent manner. PurS interacts with PurQ and PurL and is thought to assist in the transfer of the ammonia molecule from PurQ to PurL. The chain is Phosphoribosylformylglycinamidine synthase subunit PurQ from Corynebacterium glutamicum (strain ATCC 13032 / DSM 20300 / JCM 1318 / BCRC 11384 / CCUG 27702 / LMG 3730 / NBRC 12168 / NCIMB 10025 / NRRL B-2784 / 534).